The following is a 361-amino-acid chain: D-alanine--D-alanine ligase (361 aa).

One can recognise an ATP-grasp domain in the interval 134–344; sequence KILAQRAGVP…YTDLITKLID (211 aa). 169-224 is an ATP binding site; it reads ASQLGSDLFVKPSNQGSSVGVSHVTNEKEYKVALAEAFKYDDKVLVEETVHGTEVE. Asp-297, Glu-311, and Asn-313 together coordinate Mg(2+).

The protein belongs to the D-alanine--D-alanine ligase family. The cofactor is Mg(2+). Mn(2+) serves as cofactor.

The protein localises to the cytoplasm. The enzyme catalyses 2 D-alanine + ATP = D-alanyl-D-alanine + ADP + phosphate + H(+). The protein operates within cell wall biogenesis; peptidoglycan biosynthesis. Its function is as follows. Cell wall formation. This chain is D-alanine--D-alanine ligase, found in Lactobacillus gasseri (strain ATCC 33323 / DSM 20243 / BCRC 14619 / CIP 102991 / JCM 1131 / KCTC 3163 / NCIMB 11718 / NCTC 13722 / AM63).